We begin with the raw amino-acid sequence, 256 residues long: 5'-nucleotidase SurE (256 aa).

Residues aspartate 8, aspartate 9, serine 42, and asparagine 94 each coordinate a divalent metal cation.

This sequence belongs to the SurE nucleotidase family. A divalent metal cation is required as a cofactor.

The protein localises to the cytoplasm. The enzyme catalyses a ribonucleoside 5'-phosphate + H2O = a ribonucleoside + phosphate. Nucleotidase that shows phosphatase activity on nucleoside 5'-monophosphates. The sequence is that of 5'-nucleotidase SurE from Ehrlichia chaffeensis (strain ATCC CRL-10679 / Arkansas).